Here is a 166-residue protein sequence, read N- to C-terminus: Large ribosomal subunit protein uL10 (166 aa).

Belongs to the universal ribosomal protein uL10 family. Part of the ribosomal stalk of the 50S ribosomal subunit. The N-terminus interacts with L11 and the large rRNA to form the base of the stalk. The C-terminus forms an elongated spine to which L12 dimers bind in a sequential fashion forming a multimeric L10(L12)X complex.

Its function is as follows. Forms part of the ribosomal stalk, playing a central role in the interaction of the ribosome with GTP-bound translation factors. In Pseudomonas paraeruginosa (strain DSM 24068 / PA7) (Pseudomonas aeruginosa (strain PA7)), this protein is Large ribosomal subunit protein uL10.